A 362-amino-acid chain; its full sequence is HLA class I histocompatibility antigen, B alpha chain (362 aa).

A signal peptide spans 1–24 (MLVMAPRTVLLLLSAALALTETWA). Residues 3–11 (VMAPRTVLL) form a VL9 epitope region. The segment at 25 to 114 (GSHSMRYFYT…LRGYYNQSEA (90 aa)) is alpha-1. Topologically, residues 25-309 (GSHSMRYFYT…PSSQSTVPIV (285 aa)) are extracellular. Asn87 contacts a peptide antigen. The Bw6 motif signature appears at 101–107 (SLRNLRG). Residue Tyr108 coordinates a peptide antigen. A glycan (N-linked (GlcNAc...) asparagine) is linked at Asn110. An alpha-2 region spans residues 115–206 (GSHTLQSMYG…ENGKDKLERA (92 aa)). Cys125 and Cys188 are disulfide-bonded. Residues Thr167, Lys170, Glu176, Tyr183, and Tyr195 each coordinate a peptide antigen. Positions 207–298 (DPPKTHVTHH…GLPKPLTLRW (92 aa)) are alpha-3. In terms of domain architecture, Ig-like C1-type spans 209–295 (PKTHVTHHPI…QHEGLPKPLT (87 aa)). Cysteines 227 and 283 form a disulfide. Residues 299-309 (EPSSQSTVPIV) are connecting peptide. A helical transmembrane segment spans residues 310-333 (GIVAGLAVLAVVVIGAVVAAVMCR). At 334–362 (RKSSGGKGGSYSQAACSDSAQGSDVSLTA) the chain is on the cytoplasmic side. The interval 337 to 362 (SGGKGGSYSQAACSDSAQGSDVSLTA) is disordered. Residues 346–362 (QAACSDSAQGSDVSLTA) are compositionally biased toward polar residues.

As to quaternary structure, heterotrimer that consists of an alpha chain HLA-B, a beta chain B2M and a peptide (peptide-HLA-B-B2M). Early in biogenesis, HLA-B-B2M dimer interacts with the components of the peptide-loading complex composed of TAPBP, TAP1-TAP2, TAPBPL, PDIA3/ERP57 and CALR. Interacts with TAP1-TAP2 transporter via TAPBP; this interaction is obligatory for the loading of peptide epitopes delivered to the ER by TAP1-TAP2 transporter. Interacts with TAPBPL; TAPBPL binds peptide-free HLA-B-B2M complexes or those loaded with low affinity peptides, likely facilitating peptide exchange for higher affinity peptides. Only optimally assembled peptide-HLA-B-B2M trimer translocates to the surface of antigen-presenting cells, where it interacts with TCR and CD8 coreceptor on the surface of T cells. HLA-B (via polymorphic alpha-1 and alpha-2 domains) interacts with antigen-specific TCR (via CDR1, CDR2 and CDR3 domains). One HLA-B molecule (mainly via nonpolymorphic alpha-3 domain) interacts with one CD8A homodimer (via CDR-like loop); this interaction ensures peptide-HLA-B-B2M recognition by CD8-positive T cells only. Allele B*57:01 interacts (via Bw4 motif) with KIR3DL1 (via Ig-like C2-type domain); this interaction may interfere with peptide binding. Allele B*46:01 interacts with KIR2DL3. (Microbial infection) Interacts with HTLV-1 accessory protein p12I.

The protein resides in the cell membrane. Its subcellular location is the endoplasmic reticulum membrane. Its function is as follows. Antigen-presenting major histocompatibility complex class I (MHCI) molecule. In complex with B2M/beta 2 microglobulin displays primarily viral and tumor-derived peptides on antigen-presenting cells for recognition by alpha-beta T cell receptor (TCR) on HLA-B-restricted CD8-positive T cells, guiding antigen-specific T cell immune response to eliminate infected or transformed cells. May also present self-peptides derived from the signal sequence of secreted or membrane proteins, although T cells specific for these peptides are usually inactivated to prevent autoreactivity. Both the peptide and the MHC molecule are recognized by TCR, the peptide is responsible for the fine specificity of antigen recognition and MHC residues account for the MHC restriction of T cells. Typically presents intracellular peptide antigens of 8 to 13 amino acids that arise from cytosolic proteolysis via constitutive proteasome and IFNG-induced immunoproteasome. Can bind different peptides containing allele-specific binding motifs, which are mainly defined by anchor residues at position 2 and 9. Allele B*07:02: Displays peptides sharing a common signature motif, namely a Pro residue at position 2 and mainly a Leu anchor residue at the C-terminus. Presents a long peptide (APRGPHGGAASGL) derived from the cancer-testis antigen CTAG1A/NY-ESO-1, eliciting a polyclonal CD8-positive T cell response against tumor cells. Presents viral epitopes derived from HIV-1 gag-pol (TPQDLNTML) and Nef (RPQVPLRPM). Presents an immunodominant epitope derived from SARS-CoV-2 N/nucleoprotein (SPRWYFYYL). Displays self-peptides including a peptide derived from the signal sequence of HLA-DPB1 (APRTVALTA). In terms of biological role, allele B*08:01: Presents to CD8-positive T cells viral epitopes derived from EBV/HHV-4 EBNA3 (QAKWRLQTL), eliciting cytotoxic T cell response. Functionally, allele B*13:02: Presents multiple HIV-1 epitopes derived from gag (RQANFLGKI, GQMREPRGSDI), nef (RQDILDLWI), gag-pol (RQYDQILIE, GQGQWTYQI) and rev (LQLPPLERL), all having in common a Gln residue at position 2 and mainly hydrophobic amino acids Leu, Ile or Val at the C-terminus. Associated with successful control of HIV-1 infection. Its function is as follows. Allele B*18:01: Preferentially presents octomeric and nonameric peptides sharing a common motif, namely a Glu at position 2 and Phe or Tyr anchor residues at the C-terminus. Presents an EBV/HHV-4 epitope derived from BZLF1 (SELEIKRY). May present to CD8-positive T cells an antigenic peptide derived from MAGEA3 (MEVDPIGHLY), triggering an anti-tumor immune response. May display a broad repertoire of self-peptides with a preference for peptides derived from RNA-binding proteins. Allele B*27:05: Presents to CD8-positive T cells immunodominant viral epitopes derived from HCV POLG (ARMILMTHF), HIV-1 gag (KRWIILGLNK), IAV NP (SRYWAIRTR), SARS-CoV-2 N/nucleoprotein (QRNAPRITF), EBV/HHV-4 EBNA4 (HRCQAIRKK) and EBV/HHV-4 EBNA6 (RRIYDLIEL), conferring longterm protection against viral infection. Can present self-peptides derived from cytosolic and nuclear proteins. All peptides carry an Arg at position 2. The peptide-bound form interacts with NK cell inhibitory receptor KIR3DL1 and inhibits NK cell activation in a peptide-specific way, being particularly sensitive to the nature of the amino acid side chain at position 8 of the antigenic peptide. KIR3DL1 fails to recognize HLA-B*27:05 in complex with B2M and EBV/HHV-4 EBNA6 (RRIYDLIEL) peptide, which can lead to increased activation of NK cells during infection. May present an altered repertoire of peptides in the absence of TAP1-TAP2 and TAPBPL. In terms of biological role, allele B*40:01: Presents immunodominant viral epitopes derived from EBV/HHV-4 LMP2 (IEDPPFNSL) and SARS-CoV-2 N/nucleoprotein (MEVTPSGTWL), triggering memory CD8-positive T cell response. Displays self-peptides sharing a signature motif, namely a Glu at position 2 and a Leu anchor residue at the C-terminus. Functionally, allele B*41:01: Displays self-peptides sharing a signature motif, namely a Glu at position 2 and Ala or Pro anchor residues at the C-terminus. Its function is as follows. Allele B*44:02: Presents immunodominant viral epitopes derived from EBV/HHV-4 EBNA4 (VEITPYKPTW) and EBNA6 (AEGGVGWRHW, EENLLDFVRF), triggering memory CD8-positive T cell response. Displays self-peptides sharing a signature motif, namely a Glu at position 2 and Phe, Tyr or Trp anchor residues at the C-terminus. Allele B*45:01: Displays self-peptides sharing a signature motif, namely a Glu at position 2 and Ala or Pro anchor residues at the C-terminus. In terms of biological role, allele B*46:01: Preferentially presents nonameric peptides sharing a signature motif, namely Ala and Leu at position 2 and Tyr, Phe, Leu, or Met anchor residues at the C-terminus. The peptide-bound form interacts with KIR2DL3 and inhibits NK cell cytotoxic response in a peptide-specific way. Functionally, allele B*47:01: Displays self-peptides sharing a signature motif, namely an Asp at position 2 and Leu or Met anchor residues at the C-terminus. Its function is as follows. Allele B*49:01: Displays self-peptides sharing a signature motif, namely a Glu at position 2 and Ile or Val anchor residues at the C-terminus. Allele B*50:01: Displays self-peptides sharing a signature motif, namely a Glu at position 2 and Ala or Pro anchor residues at the C-terminus. In terms of biological role, allele B*51:01: Presents an octomeric HIV-1 epitope derived from gag-pol (TAFTIPSI) to the public TRAV17/TRBV7-3 TCR clonotype, strongly suppressing HIV-1 replication. Functionally, allele B*54:01: Displays peptides sharing a common signature motif, namely a Pro residue at position 2 and Ala anchor residue at the C-terminus. Its function is as follows. Allele B*55:01: Displays peptides sharing a common signature motif, namely a Pro residue at position 2 and Ala anchor residue at the C-terminus. Allele B*56:01: Displays peptides sharing a common signature motif, namely a Pro residue at position 2 and Ala anchor residue at the C-terminus. In terms of biological role, allele B*57:01: The peptide-bound form recognizes KIR3DL1 and inhibits NK cell cytotoxic response. Presents HIV gag peptides (immunodominant KAFSPEVIPMF and subdominant KALGPAATL epitopes) predominantly to CD8-positive T cell clones expressing a TRAV41-containing TCR, triggering HLA-B-restricted T cell responses. Functionally, allele B*67:01: Displays peptides sharing a common signature motif, namely a Pro residue at position 2 and Leu anchor residue at the C-terminus. This chain is HLA class I histocompatibility antigen, B alpha chain, found in Homo sapiens (Human).